The following is a 563-amino-acid chain: Anaerobic glycerol-3-phosphate dehydrogenase subunit A (563 aa).

20-48 contributes to the FAD binding site; that stretch reads DVIIIGGGATGAGIARDCALRGIDCILLE.

This sequence belongs to the FAD-dependent glycerol-3-phosphate dehydrogenase family. In terms of assembly, composed of a catalytic GlpA/B dimer and of membrane bound GlpC. Requires FAD as cofactor. FMN serves as cofactor.

It localises to the cell inner membrane. It catalyses the reaction a quinone + sn-glycerol 3-phosphate = dihydroxyacetone phosphate + a quinol. Its pathway is polyol metabolism; glycerol degradation via glycerol kinase pathway; glycerone phosphate from sn-glycerol 3-phosphate (anaerobic route): step 1/1. The sequence is that of Anaerobic glycerol-3-phosphate dehydrogenase subunit A (glpA) from Haemophilus influenzae (strain ATCC 51907 / DSM 11121 / KW20 / Rd).